A 325-amino-acid polypeptide reads, in one-letter code: NADH-quinone oxidoreductase subunit H (325 aa).

Transmembrane regions (helical) follow at residues 11 to 31, 81 to 101, 114 to 134, 154 to 174, 186 to 206, 237 to 257, 265 to 285, and 304 to 324; these read ILLT…CGAF, VIFT…FAIV, IGIL…LFAG, LSYE…AGSF, VWNV…GVAV, FFVG…TLFF, LPPF…FILI, and ICLP…LWQA.

The protein belongs to the complex I subunit 1 family. NDH-1 is composed of 13 different subunits. Subunits NuoA, H, J, K, L, M, N constitute the membrane sector of the complex.

It localises to the cell inner membrane. The enzyme catalyses a quinone + NADH + 5 H(+)(in) = a quinol + NAD(+) + 4 H(+)(out). NDH-1 shuttles electrons from NADH, via FMN and iron-sulfur (Fe-S) centers, to quinones in the respiratory chain. The immediate electron acceptor for the enzyme in this species is believed to be ubiquinone. Couples the redox reaction to proton translocation (for every two electrons transferred, four hydrogen ions are translocated across the cytoplasmic membrane), and thus conserves the redox energy in a proton gradient. This subunit may bind ubiquinone. This Escherichia coli O7:K1 (strain IAI39 / ExPEC) protein is NADH-quinone oxidoreductase subunit H.